Consider the following 498-residue polypeptide: Ammonium transporter 3 member 1 (498 aa).

The next 11 membrane-spanning stretches (helical) occupy residues 33-53, 58-78, 143-163, 171-191, 206-226, 241-261, 276-296, 301-321, 325-345, 369-389, and 412-432; these read ISATLVGMQSVPGLVILYGSI, WAVNSAFMALYAFAAVWLCWV, MVYFQCVFAAITLILLAGSLL, WMLFVPLWLTFSYTVGAFSLW, GGYVIHLSSGVAGFTAAYWVG, VLLMLTGAGILWMGWAGFNGG, NTNICAATSLLVWTCLDVIFF, VIGAVQGMITGLVCITPGAGL, WAAIVMGILSGSIPWFTMMVV, GFLGGATTGLFAEPVLCSLFL, and VAGALFIICWNVVVTSLVCLA. The segment at 478 to 498 is disordered; it reads DNNDTHHNNNKAAPSGVTQNV. Over residues 487-498 the composition is skewed to polar residues; it reads NKAAPSGVTQNV.

The protein belongs to the ammonia transporter channel (TC 1.A.11.2) family. Expressed in root.

It localises to the membrane. Involved in ammonium transport. The polypeptide is Ammonium transporter 3 member 1 (AMT3-1) (Oryza sativa subsp. japonica (Rice)).